Here is a 299-residue protein sequence, read N- to C-terminus: Acetaldehyde dehydrogenase 2 (299 aa).

The Acyl-thioester intermediate role is filled by C130. Residues 161 to 169 (SVGPGTRKN) and N272 each bind NAD(+).

It belongs to the acetaldehyde dehydrogenase family.

The catalysed reaction is acetaldehyde + NAD(+) + CoA = acetyl-CoA + NADH + H(+). This chain is Acetaldehyde dehydrogenase 2, found in Burkholderia lata (strain ATCC 17760 / DSM 23089 / LMG 22485 / NCIMB 9086 / R18194 / 383).